The chain runs to 432 residues: Trigger factor (432 aa).

The PPIase FKBP-type domain occupies Glu-161 to Pro-246.

It belongs to the FKBP-type PPIase family. Tig subfamily.

The protein resides in the cytoplasm. It carries out the reaction [protein]-peptidylproline (omega=180) = [protein]-peptidylproline (omega=0). Functionally, involved in protein export. Acts as a chaperone by maintaining the newly synthesized protein in an open conformation. Functions as a peptidyl-prolyl cis-trans isomerase. This Salmonella typhi protein is Trigger factor.